Here is a 346-residue protein sequence, read N- to C-terminus: Uroporphyrinogen decarboxylase (346 aa).

Residues 26 to 30 (RQAGR), D76, Y153, S208, and H323 contribute to the substrate site.

It belongs to the uroporphyrinogen decarboxylase family. In terms of assembly, homodimer.

It is found in the cytoplasm. The catalysed reaction is uroporphyrinogen III + 4 H(+) = coproporphyrinogen III + 4 CO2. It participates in porphyrin-containing compound metabolism; protoporphyrin-IX biosynthesis; coproporphyrinogen-III from 5-aminolevulinate: step 4/4. Functionally, catalyzes the decarboxylation of four acetate groups of uroporphyrinogen-III to yield coproporphyrinogen-III. The protein is Uroporphyrinogen decarboxylase of Prochlorococcus marinus (strain MIT 9515).